The sequence spans 484 residues: Pre-glycoprotein polyprotein GP complex (484 aa).

The N-myristoyl glycine; by host moiety is linked to residue G2. Residues 2–17 are Extracellular-facing; the sequence is GQLVSFFQEIPNIIQE. A helical transmembrane segment spans residues 18–33; the sequence is AINIALIAVSLIAILK. Residues 34–58 are Cytoplasmic-facing; that stretch reads GLVNLWKSGLFQLLVFLILAGRSCS. C57 is a binding site for Zn(2+). Over 59-423 the chain is Extracellular; the sequence is FKIGRSTELQ…QGKTPITLVD (365 aa). Intrachain disulfides connect C85–C225, C270–C283, C292–C301, and C355–C376. N-linked (GlcNAc...) asparagine; by host glycosylation is found at N88, N125, N178, and N218. N356, N364, N381, and N386 each carry an N-linked (GlcNAc...) asparagine; by host glycan. The helical transmembrane segment at 424 to 444 threads the bilayer; that stretch reads ICFWSTLFFTTTLFLHLVGFP. Over 445–484 the chain is Cytoplasmic; that stretch reads THRHIQGEPCPLPHKLNSNGGCRCGRYPELKKPTTWHRKH. 7 residues coordinate Zn(2+): H446, H448, C454, H458, C466, C468, and H484.

Belongs to the arenaviridae GPC protein family. In terms of assembly, interacts with glycoprotein G2. Part of the GP complex (GP-C) together with glycoprotein G1 and glycoprotein G2. The GP-complex interacts with protein Z, which interacts with ribonucleocapsid; these interactions may induce virion budding. Homotrimer; disulfide-linked. In pre-fusion state, G1 homotrimers bind G2 homotrimers via ionic interactions. Part of the GP complex (GP-C) together with glycoprotein G2 and the stable signal peptide. The GP-complex interacts with protein Z, which interacts with ribonucleocapsid; these interactions may induce virion budding. As to quaternary structure, homotrimer. Interacts with the stable signal peptide. In pre-fusion state, G2 homotrimers bind G1 homotrimers via ionic interactions. Part of the GP complex (GP-C) together with glycoprotein G1 and the stable signal peptide. Acidification in the endosome triggers rearrangements, which ultimately leads to a 6 helix bundle formed by the two heptad repeat domains (HR1 and HR2) in post-fusion state. The GP-complex interacts with protein Z, which interacts with ribonucleocapsid; these interactions may induce virion budding. Post-translationally, specific enzymatic cleavages in vivo yield mature proteins. GP-C polyprotein is cleaved in the endoplasmic reticulum by the host protease MBTPS1. Only cleaved glycoprotein is incorporated into virions. The SSP remains stably associated with the GP complex following cleavage by signal peptidase and plays crucial roles in the trafficking of GP through the secretory pathway. In terms of processing, myristoylation is necessary for GP2-mediated fusion activity.

The protein resides in the virion membrane. Its subcellular location is the host endoplasmic reticulum membrane. The protein localises to the host Golgi apparatus membrane. It is found in the host cell membrane. Functionally, functions as a cleaved signal peptide that is retained as the third component of the GP complex (GP-C). Helps to stabilize the spike complex in its native conformation. The SSP is required for efficient glycoprotein expression, post-translational maturation cleavage of G1 and G2, glycoprotein transport to the cell surface plasma membrane, formation of infectious virus particles, and acid pH-dependent glycoprotein-mediated cell fusion. Glycoprotein G1: Forms the virion spikes together with glycoprotein G2. The glycoprotein spike trimers are connected to the underlying matrix. Interacts with the host receptor leading to virus endocytosis. Its function is as follows. Forms the virion spikes together with glycoprotein G1. The glycoprotein spike trimers are connected to the underlying matrix. Class I viral fusion protein that directs fusion of viral and host endosomal membranes, leading to delivery of the nucleocapsid into the cytoplasm. Membrane fusion is mediated by irreversible conformational changes induced by acidification. This Chapare mammarenavirus (isolate Human/Bolivia/810419/2003) protein is Pre-glycoprotein polyprotein GP complex.